The following is a 116-amino-acid chain: Vesicle-associated membrane protein 2 (116 aa).

The segment at 1-33 (MSATAATAPPAAPAGEGGPPAPPPNLTSNRRLQ) is disordered. Ser-2 bears the N-acetylserine mark. Over 2 to 94 (SATAATAPPA…KRKYWWKNLK (93 aa)) the chain is Cytoplasmic. The v-SNARE coiled-coil homology domain maps to 31-91 (RLQQTQAQVD…AKLKRKYWWK (61 aa)). The required for interaction with SEPT8 stretch occupies residues 92–116 (NLKMMIILGVICAIILIIIIVYFSS). The chain crosses the membrane as a helical; Anchor for type IV membrane protein span at residues 95-114 (MMIILGVICAIILIIIIVYF). Residues 115 to 116 (SS) lie on the Vesicular side of the membrane.

This sequence belongs to the synaptobrevin family. In terms of assembly, part of the SNARE core complex containing SNAP25, VAMP2 and STX1A; this complex constitutes the basic catalytic machinery of the complex neurotransmitter release apparatus. Recruited to the SNARE complex following binding of the SNARE complex component STX1A to STXBP1. This complex binds to CPLX1. Interacts with POPDC1 and STX4. Interacts with VAPA and VAPB. Interacts with WDFY2, PRKCZ and PRKCI. Forms a complex with WDFY2 and PRKCZ. Interacts (via N-terminus) with KCNB1 (via N-terminus and C-terminus); stimulates the channel inactivation rate of KCNB1. Interacts with SEPT8; the interaction inhibits interaction of VAMP2 with SYP. Interacts with SYP; the interaction is inhibited by interaction with SEPT8. Interacts with PICALM. Interacts with alpha-synuclein/SNCA. Interacts with STX3. Phosphorylated by PRKCZ in vitro and this phosphorylation is increased in the presence of WDFY2.

Its subcellular location is the cytoplasmic vesicle. It is found in the secretory vesicle. It localises to the synaptic vesicle membrane. The protein resides in the cell membrane. Its function is as follows. Involved in the targeting and/or fusion of transport vesicles to their target membrane. Major SNARE protein of synaptic vesicles which mediates fusion of synaptic vesicles to release neurotransmitters. Essential for fast vesicular exocytosis and activity-dependent neurotransmitter release as well as fast endocytosis that mediates rapid reuse of synaptic vesicles. Modulates the gating characteristics of the delayed rectifier voltage-dependent potassium channel KCNB1. This chain is Vesicle-associated membrane protein 2 (VAMP2), found in Bos taurus (Bovine).